The chain runs to 295 residues: sn-glycerol-3-phosphate transport system permease protein UgpA (295 aa).

The Cytoplasmic portion of the chain corresponds to 1–11 (MSSSRPVFRSR). The chain crosses the membrane as a helical span at residues 12-32 (WLPYLLVAPQLIITVIFFIWP). Topologically, residues 33–80 (AGEALWYSLQSVDPFGFSSQFVGLDNFVTLFHDSYYLDAFWTTIKFST) are periplasmic. In terms of domain architecture, ABC transmembrane type-1 spans 76–284 (IKFSTFVTVS…FLVIVLTVVQ (209 aa)). Residues 81–101 (FVTVSGLLVSLFFAALVEYIV) traverse the membrane as a helical segment. The Cytoplasmic portion of the chain corresponds to 102–109 (RGSRFYQT). Residues 110–130 (LMLLPYAVAPAVAAVLWIFLF) form a helical membrane-spanning segment. Over 131–156 (NPGRGLITHFLAEFGYDWNHAQNSGQ) the chain is Periplasmic. A helical transmembrane segment spans residues 157–177 (AMFLVVFASVWKQISYNFLFF). Topologically, residues 178-207 (YAALQSIPRSLIEAAAIDGAGPIRRFFKIA) are cytoplasmic. A helical transmembrane segment spans residues 208 to 228 (LPLIAPVSFFLLVVNLVYAFF). Residues 229 to 262 (DTFPVIDAATSGGPVQATTTLIYKIYREGFTGLD) are Periplasmic-facing. Residues 263–283 (LASSAAQSVVLMFLVIVLTVV) traverse the membrane as a helical segment. Residues 284 to 295 (QFRYVEGKVRYQ) lie on the Cytoplasmic side of the membrane.

This sequence belongs to the binding-protein-dependent transport system permease family. UgpAE subfamily. The complex is composed of two ATP-binding proteins (UgpC), two transmembrane proteins (UgpA and UgpE) and a solute-binding protein (UgpB).

It localises to the cell inner membrane. Part of the ABC transporter complex UgpBAEC involved in sn-glycerol-3-phosphate (G3P) import. Probably responsible for the translocation of the substrate across the membrane. This Escherichia coli O6:K15:H31 (strain 536 / UPEC) protein is sn-glycerol-3-phosphate transport system permease protein UgpA (ugpA).